Consider the following 220-residue polypeptide: Adenylate kinase (220 aa).

10–15 contributes to the ATP binding site; the sequence is GAGKGT. The tract at residues 30 to 59 is NMP; the sequence is STGDMLRAAVKAGTPLGVEAKGYMDAGKLV. AMP is bound by residues Thr-31, Arg-36, 57–59, 85–88, and Gln-92; these read KLV and GFPR. The segment at 122–159 is LID; sequence GRRTHPASGRTYHVKFNPPKVEGKDDVTGEPLIQRDDD. ATP contacts are provided by residues Arg-123 and 132-133; that span reads TY. Arg-156 and Arg-167 together coordinate AMP. Position 206 (Gly-206) interacts with ATP.

Belongs to the adenylate kinase family. In terms of assembly, monomer.

The protein localises to the cytoplasm. It catalyses the reaction AMP + ATP = 2 ADP. It participates in purine metabolism; AMP biosynthesis via salvage pathway; AMP from ADP: step 1/1. Catalyzes the reversible transfer of the terminal phosphate group between ATP and AMP. Plays an important role in cellular energy homeostasis and in adenine nucleotide metabolism. The polypeptide is Adenylate kinase (Burkholderia multivorans (strain ATCC 17616 / 249)).